The primary structure comprises 638 residues: Chaperone protein HtpG (638 aa).

Residues 1 to 345 are a; substrate-binding; the sequence is MTTETFEFQV…AQDLSLNVSR (345 aa). Positions 346–560 are b; the sequence is EILQQDRHIR…AGELTPALEN (215 aa). Positions 561–638 are c; the sequence is MYRAMGQEVP…LMADRLERTL (78 aa).

The protein belongs to the heat shock protein 90 family. In terms of assembly, homodimer.

It localises to the cytoplasm. Its function is as follows. Molecular chaperone. Has ATPase activity. This Streptomyces coelicolor (strain ATCC BAA-471 / A3(2) / M145) protein is Chaperone protein HtpG.